The primary structure comprises 242 residues: Uridylate kinase (242 aa).

12-15 lines the ATP pocket; the sequence is KLSG. The tract at residues 20–25 is involved in allosteric activation by GTP; the sequence is GDEGFG. G54 contributes to the UMP binding site. ATP is bound by residues G55 and R59. UMP contacts are provided by residues D74 and 135-142; that span reads TGSPFFTT. T162, Y168, and D171 together coordinate ATP.

This sequence belongs to the UMP kinase family. Homohexamer.

It is found in the cytoplasm. It catalyses the reaction UMP + ATP = UDP + ADP. The protein operates within pyrimidine metabolism; CTP biosynthesis via de novo pathway; UDP from UMP (UMPK route): step 1/1. Its activity is regulated as follows. Allosterically activated by GTP. Inhibited by UTP. Functionally, catalyzes the reversible phosphorylation of UMP to UDP. In Pasteurella multocida (strain Pm70), this protein is Uridylate kinase.